Here is an 84-residue protein sequence, read N- to C-terminus: ATP synthase subunit c (84 aa).

Transmembrane regions (helical) follow at residues 1 to 21 and 53 to 73; these read MLAW…ALVG and LLFA…VALI.

Belongs to the ATPase C chain family. F-type ATPases have 2 components, F(1) - the catalytic core - and F(0) - the membrane proton channel. F(1) has five subunits: alpha(3), beta(3), gamma(1), delta(1), epsilon(1). F(0) has three main subunits: a(1), b(2) and c(10-14). The alpha and beta chains form an alternating ring which encloses part of the gamma chain. F(1) is attached to F(0) by a central stalk formed by the gamma and epsilon chains, while a peripheral stalk is formed by the delta and b chains.

The protein localises to the cell inner membrane. Functionally, f(1)F(0) ATP synthase produces ATP from ADP in the presence of a proton or sodium gradient. F-type ATPases consist of two structural domains, F(1) containing the extramembraneous catalytic core and F(0) containing the membrane proton channel, linked together by a central stalk and a peripheral stalk. During catalysis, ATP synthesis in the catalytic domain of F(1) is coupled via a rotary mechanism of the central stalk subunits to proton translocation. In terms of biological role, key component of the F(0) channel; it plays a direct role in translocation across the membrane. A homomeric c-ring of between 10-14 subunits forms the central stalk rotor element with the F(1) delta and epsilon subunits. This Dictyoglomus thermophilum (strain ATCC 35947 / DSM 3960 / H-6-12) protein is ATP synthase subunit c.